A 4144-amino-acid polypeptide reads, in one-letter code: DNA-dependent protein kinase catalytic subunit (4144 aa).

The residue at position 127 (K127) is an N6-acetyllysine. The stretch at 298–333 is one HEAT 1 repeat; it reads DNYVSLFEVLSKWCSHTNVEMKKAAHSALESFLKQV. A phosphoserine mark is found at S521, S851, and S903. One copy of the HEAT 2 repeat lies at 1014–1050; sequence QDTVALLETILDGIVDPVDSTLRDFCGRCIREFLKWS. At S1075 the chain carries Phosphoserine. K1219 is modified (N6-acetyllysine). Positions 1516 to 1551 are interaction with C1D; the sequence is LDPSCKRLASGLLELAFAFGGLCEHLVDLLLDTAVL. Residues 1516 to 1551 are leucine-zipper; that stretch reads LDPSCKRLASGLLELAFAFGGLCEHLVDLLLDTAVL. Residues 1736–1769 form a TPR 1 repeat; it reads PMKSEEFPVGTLRYSNYVDCMKKFLDALELSQSP. K1983 carries the N6-acetyllysine modification. S2069 carries the phosphoserine; by autocatalysis modification. N6-acetyllysine is present on K2271. The tract at residues 2448–3228 is KIP-binding; the sequence is LDIIYKMMAK…DHSLSMDEER (781 aa). Phosphothreonine is present on T2547. Residue T2621 is modified to Phosphothreonine; by autocatalysis. Residue S2624 is modified to Phosphoserine; by autocatalysis. Phosphothreonine; by autocatalysis is present on residues T2650 and T2659. Residues 2697–2729 form a disordered region; it reads AQKRNEKSQRAPLKSVGPDFGEKKLGLPGDKVD. A compositionally biased stretch (basic and acidic residues) spans 2716–2729; that stretch reads FGEKKLGLPGDKVD. A may split the end of the DNA molecule, with the two strands separating around the region region spans residues 2753 to 2781; that stretch reads EKLSLIYARKGIAEQKREKEIKSELKMKH. Position 2805 is a phosphoserine (S2805). TPR repeat units follow at residues 2903-2935, 2936-2964, and 2965-2998; these read PVGVRLLEEALLHLGPQEPPAKQFKGRMRVSPD, VVRWMELAKLYRSIGEYDILRGIFSSEIG, and TKQITQSAIFAEARSDYSEAAKQYNEALNKEEWV. Residues 2922 to 3555 enclose the FAT domain; it reads PAKQFKGRMR…VYPFIISSES (634 aa). S3221 carries the phosphoserine modification. N6-acetyllysine occurs at positions 3257, 3276, 3654, and 3658. The stretch at 3711–3748 is one TPR 5 repeat; the sequence is LRNELEIPGQYDGKGKPLPEYHARIAGFDERIKVMASI. In terms of domain architecture, PI3K/PI4K catalytic spans 3738-4069; sequence FDERIKVMAS…IHYAKRKLAG (332 aa). Residues 3744–3750 are G-loop; it reads VMASIRK. S3747 and S3837 each carry phosphoserine. The tract at residues 3935–3943 is catalytic loop; it reads GIGDRHLNN. An activation loop region spans residues 3955 to 3980; sequence GIDFGHAFGSATQFLPVPELMPFRLT. S4042 bears the Phosphoserine mark. The 33-residue stretch at 4112–4144 folds into the FATC domain; the sequence is NGLSEEAQVKCLIDQATDPNILGRTWIGWEPWM.

This sequence belongs to the PI3/PI4-kinase family. In terms of assembly, DNA-PK is a heterotrimer of PRKDC and the Ku dimer (composed of XRCC6/Ku70 and XRCC5/Ku86). Formation of this complex may be promoted by interaction with ILF3. Component of the core long-range non-homologous end joining (NHEJ) complex (also named DNA-PK complex) composed of PRKDC, LIG4, XRCC4, XRCC6/Ku70, XRCC5/Ku86 and NHEJ1/XLF. Additional component of the NHEJ complex includes PAXX. Following autophosphorylation, PRKDC dissociates from DNA. Interacts with DNA-PKcs-interacting protein (KIP) with the region upstream the kinase domain. PRKDC alone also interacts with and phosphorylates DCLRE1C, thereby activating the latent endonuclease activity of this protein. Interacts with C1D. Interacts with TTI1 and TELO2. Interacts with CIB1. Interacts with SETX. Interacts with NR4A3; the DNA-dependent protein kinase complex DNA-PK phosphorylates and activates NR4A3 and prevents NR4A3 ubiquitination and degradation. Interacts with BRAT1. Part of the HDP-RNP complex composed of at least HEXIM1, PRKDC, XRCC5, XRCC6, paraspeckle proteins (SFPQ, NONO, PSPC1, RBM14, and MATR3) and NEAT1 RNA. Interacts with KAT5. In terms of processing, autophosphorylated at two clusters, the T2609 cluster and the S2056 cluster. Autophosphorylated on Ser-2069, Thr-2621, Thr-2650 and Thr-2659. Ser-2069 and Thr-2621 are DNA damage-inducible phosphorylation sites (inducible with ionizing radiation, IR) dephosphorylated by PPP5C. Autophosphorylation induces a conformational change that leads to remodeling of the DNA-PK complex, requisite for efficient end processing and DNA repair. Autophosphorylation in trans within DNA-PK complexes loaded on DNA ends leads to the dissociation of PRKDC from DNA and the transition into the short-range NHEJ complex. Autophosphorylation of the T2609 cluster is required for hematopoietic development and protein synthesis in erythrocytes precursors. S-nitrosylated by GAPDH. Post-translationally, polyubiquitinated by RNF144A, leading to proteasomal degradation.

The protein resides in the nucleus. The protein localises to the nucleolus. It localises to the cytoplasm. Its subcellular location is the cytosol. The catalysed reaction is L-seryl-[protein] + ATP = O-phospho-L-seryl-[protein] + ADP + H(+). It carries out the reaction L-threonyl-[protein] + ATP = O-phospho-L-threonyl-[protein] + ADP + H(+). Its activity is regulated as follows. Activity seems to be attenuated by autophosphorylation. Binding to the SL1 region of U3 small nucleolar RNA promotes auto-phosphorylation activity. Inhibited by wortmannin. Functionally, serine/threonine-protein kinase that acts as a molecular sensor for DNA damage. Involved in DNA non-homologous end joining (NHEJ) required for double-strand break (DSB) repair and V(D)J recombination. Must be bound to DNA to express its catalytic properties. Promotes processing of hairpin DNA structures in V(D)J recombination by activation of the hairpin endonuclease artemis (DCLRE1C). Recruited by XRCC5 and XRCC6 to DNA ends and is required to (1) protect and align broken ends of DNA, thereby preventing their degradation, (2) and sequester the DSB for repair by NHEJ. Acts as a scaffold protein to aid the localization of DNA repair proteins to the site of damage. The assembly of the DNA-PK complex at DNA ends is also required for the NHEJ ligation step. Found at the ends of chromosomes, suggesting a further role in the maintenance of telomeric stability and the prevention of chromosomal end fusion. Also involved in modulation of transcription. As part of the DNA-PK complex, involved in the early steps of ribosome assembly by promoting the processing of precursor rRNA into mature 18S rRNA in the small-subunit processome. Binding to U3 small nucleolar RNA, recruits PRKDC and XRCC5/Ku86 to the small-subunit processome. Recognizes the substrate consensus sequence [ST]-Q. Phosphorylates 'Ser-139' of histone variant H2AX, thereby regulating DNA damage response mechanism. Phosphorylates ASF1A, DCLRE1C, c-Abl/ABL1, histone H1, HSPCA, c-jun/JUN, p53/TP53, PARP1, POU2F1, DHX9, FH, SRF, NHEJ1/XLF, XRCC1, XRCC4, XRCC5, XRCC6, WRN, MYC and RFA2. Can phosphorylate C1D not only in the presence of linear DNA but also in the presence of supercoiled DNA. Ability to phosphorylate p53/TP53 in the presence of supercoiled DNA is dependent on C1D. Acts as a regulator of the phosphatidylinositol 3-kinase/protein kinase B signal transduction by mediating phosphorylation of 'Ser-473' of protein kinase B (PKB/AKT1, PKB/AKT2, PKB/AKT3), promoting their activation. Contributes to the determination of the circadian period length by antagonizing phosphorylation of CRY1 'Ser-588' and increasing CRY1 protein stability, most likely through an indirect mechanism. Plays a role in the regulation of DNA virus-mediated innate immune response by assembling into the HDP-RNP complex, a complex that serves as a platform for IRF3 phosphorylation and subsequent innate immune response activation through the cGAS-STING pathway. Also regulates the cGAS-STING pathway by catalyzing phosphorylation of CGAS, thereby impairing CGAS oligomerization and activation. Also regulates the cGAS-STING pathway by mediating phosphorylation of PARP1. The sequence is that of DNA-dependent protein kinase catalytic subunit (PRKDC) from Canis lupus familiaris (Dog).